The sequence spans 515 residues: Galactose-1-phosphate uridylyltransferase (515 aa).

Belongs to the galactose-1-phosphate uridylyltransferase type 2 family.

It is found in the cytoplasm. It catalyses the reaction alpha-D-galactose 1-phosphate + UDP-alpha-D-glucose = alpha-D-glucose 1-phosphate + UDP-alpha-D-galactose. Its pathway is carbohydrate metabolism; galactose metabolism. Functionally, transfers the UMP unit from UDP-glucose (UDP-Glc) to Gal1P. Can also transfer the UMP unit to GlcNAc1P and GalNAc1P. Involved in the general galactose metabolism, and also involved in the lacto-N-biose I/galacto-N-biose (LNB/GNB) degradation pathway, which is important for host intestinal colonization by bifidobacteria. The polypeptide is Galactose-1-phosphate uridylyltransferase (Bifidobacterium longum subsp. longum (strain ATCC 15707 / DSM 20219 / JCM 1217 / NCTC 11818 / E194b)).